A 157-amino-acid polypeptide reads, in one-letter code: 6,7-dimethyl-8-ribityllumazine synthase 1 (157 aa).

5-amino-6-(D-ribitylamino)uracil contacts are provided by residues Phe-22, 53 to 55, and 82 to 84; these read ALE and TVI. 87-88 serves as a coordination point for (2S)-2-hydroxy-3-oxobutyl phosphate; sequence ET. His-90 serves as the catalytic Proton donor. 5-amino-6-(D-ribitylamino)uracil is bound at residue Asn-115. (2S)-2-hydroxy-3-oxobutyl phosphate is bound at residue Arg-129.

It belongs to the DMRL synthase family.

The enzyme catalyses (2S)-2-hydroxy-3-oxobutyl phosphate + 5-amino-6-(D-ribitylamino)uracil = 6,7-dimethyl-8-(1-D-ribityl)lumazine + phosphate + 2 H2O + H(+). The protein operates within cofactor biosynthesis; riboflavin biosynthesis; riboflavin from 2-hydroxy-3-oxobutyl phosphate and 5-amino-6-(D-ribitylamino)uracil: step 1/2. Functionally, catalyzes the formation of 6,7-dimethyl-8-ribityllumazine by condensation of 5-amino-6-(D-ribitylamino)uracil with 3,4-dihydroxy-2-butanone 4-phosphate. This is the penultimate step in the biosynthesis of riboflavin. The chain is 6,7-dimethyl-8-ribityllumazine synthase 1 from Brucella suis biovar 1 (strain 1330).